Here is a 201-residue protein sequence, read N- to C-terminus: Peptide deformylase (201 aa).

The Fe cation site is built by Cys-121 and His-163. Residue Glu-164 is part of the active site. His-167 serves as a coordination point for Fe cation.

This sequence belongs to the polypeptide deformylase family. Fe(2+) is required as a cofactor.

It carries out the reaction N-terminal N-formyl-L-methionyl-[peptide] + H2O = N-terminal L-methionyl-[peptide] + formate. In terms of biological role, removes the formyl group from the N-terminal Met of newly synthesized proteins. Requires at least a dipeptide for an efficient rate of reaction. N-terminal L-methionine is a prerequisite for activity but the enzyme has broad specificity at other positions. The sequence is that of Peptide deformylase from Parasynechococcus marenigrum (strain WH8102).